The chain runs to 227 residues: Rho-related GTP-binding protein RhoN (227 aa).

Residue 14-21 participates in GTP binding; that stretch reads GDAECGKT. The Effector region motif lies at 36-44; it reads YVPTVFENY. Residues 61 to 65 and 119 to 122 each bind GTP; these read DTSGS and CKLD. Residues 186–227 form a disordered region; that stretch reads HRQLRRTDSRRGLQRSTQLSGRPDRGNEGEMHKDRAKSCNLM. Positions 207-227 are enriched in basic and acidic residues; the sequence is RPDRGNEGEMHKDRAKSCNLM. Cys224 is subject to Cysteine methyl ester. Cys224 is lipidated: S-geranylgeranyl cysteine. Residues 225 to 227 constitute a propeptide, removed in mature form; sequence NLM.

The protein belongs to the small GTPase superfamily. Rho family. Interacts with the Rho-GAP domain of RACGAP1. Interacts with UBXD5. Interacts with PRAG1. In terms of tissue distribution, expressed specifically in neurons in the brain and spinal cord and also in hepatic stellate cells.

It localises to the cytoplasmic vesicle. The protein localises to the secretory vesicle. Its subcellular location is the acrosome membrane. May be specifically involved in neuronal and hepatic functions. Is a C3 toxin-insensitive member of the Rho subfamily. The sequence is that of Rho-related GTP-binding protein RhoN (Rnd2) from Mus musculus (Mouse).